Reading from the N-terminus, the 55-residue chain is Ferredoxin (55 aa).

4Fe-4S ferredoxin-type domains are found at residues Phe2–Asp27 and Thr28–Glu55. [4Fe-4S] cluster is bound by residues Cys8, Cys11, Cys14, Cys18, Cys37, Cys40, Cys43, and Cys47.

[4Fe-4S] cluster serves as cofactor.

Ferredoxins are iron-sulfur proteins that transfer electrons in a wide variety of metabolic reactions. The polypeptide is Ferredoxin (Clostridium butyricum).